Here is a 460-residue protein sequence, read N- to C-terminus: Nuclear transport factor 2 (460 aa).

The region spanning 15–131 (VGRAFVEQYY…YFVLNDVFRF (117 aa)) is the NTF2 domain. Disordered regions lie at residues 207–226 (EPPT…GDAP), 238–289 (KSSP…VDVE), and 361–460 (RQAV…GGSS). In terms of domain architecture, RRM spans 293 to 370 (HSIYVRNLPF…RQAVVEEKKT (78 aa)). Over residues 373–382 (RGGGNNGGSR) the composition is skewed to gly residues. Positions 383–394 (GRYFSGRGSFRN) are enriched in low complexity. Composition is skewed to gly residues over residues 399-416 (GGRG…GGEF) and 450-460 (GRGGARGGGSS).

As to quaternary structure, interacts with MBD6.

It is found in the cytoplasm. The protein localises to the nucleus. Functionally, involved in RNA-directed DNA methylation (RdDM). In Arabidopsis thaliana (Mouse-ear cress), this protein is Nuclear transport factor 2.